The chain runs to 371 residues: Putative RNA-binding protein Luc7-like 1 (371 aa).

Coiled-coil stretches lie at residues 87 to 177 (MDHL…RNSM) and 218 to 259 (FIQI…LSRR). Positions 232 to 257 (VAEKQEKRNQDRLRRREEREREERLS) are enriched in basic and acidic residues. The segment at 232-371 (VAEKQEKRNQ…RSEEKEAGEI (140 aa)) is disordered. Positions 258 to 317 (RRSGSRTRDRRRSRSRDRRRRRSRSTSRERRKLSRSRSRDRHRRHRSRSRSHSRGHRRAS) are enriched in basic residues. Basic and acidic residues-rich tracts occupy residues 318-351 (RDRSAKYKFSRERASREESWESGRSERGPPDWRL) and 361-371 (RRSEEKEAGEI). A phosphoserine mark is found at Ser-332, Ser-336, and Ser-363.

Belongs to the Luc7 family. As to expression, ubiquitous.

Its function is as follows. May bind to RNA via its Arg/Ser-rich domain. The chain is Putative RNA-binding protein Luc7-like 1 (LUC7L) from Homo sapiens (Human).